Reading from the N-terminus, the 347-residue chain is 3',5'-bisphosphate nucleotidase 2 (347 aa).

The Proton acceptor role is filled by Asp-46. Mg(2+)-binding residues include Glu-71, Asp-134, Ile-136, and Asp-137. Thr-139 acts as the Proton acceptor in catalysis. The adenosine 3',5'-bisphosphate site is built by Thr-139, Ser-255, Lys-258, Arg-272, and Asp-284. 4 residues coordinate AMP: Ser-255, Lys-258, Arg-272, and Asp-284. Residue Asp-284 participates in Mg(2+) binding.

It belongs to the inositol monophosphatase superfamily. It depends on Mg(2+) as a cofactor. As to expression, very low expression in roots, leaves, stems, flowers and siliques.

The enzyme catalyses adenosine 3',5'-bisphosphate + H2O = AMP + phosphate. It carries out the reaction 3'-phosphoadenylyl sulfate + H2O = adenosine 5'-phosphosulfate + phosphate. The catalysed reaction is 1D-myo-inositol 1,4-bisphosphate + H2O = 1D-myo-inositol 4-phosphate + phosphate. Its pathway is signal transduction; phosphatidylinositol signaling pathway. Inhibited by Li(+) (IC(50)=10 mM), Na(+) (IC(50)=200 mM) and Ca(2+) (IC(50)=0.03 mM). Functionally, phosphatase that converts adenosine 3'-phosphate 5'-phosphosulfate (PAPS) to adenosine 5'-phosphosulfate (APS) and 3'-phosphoadenosine 5'-phosphate (3'-PAP) to AMP. May regulate the flux of sulfur in the sulfur-activation pathway by converting PAPS to APS. Prevents both the toxicity of PAP on RNA processing enzymes as well as the product inhibition by PAP of sulfate conjugation. Is also able to hydrolyze inositol 1,4-bisphosphate. The polypeptide is 3',5'-bisphosphate nucleotidase 2 (Arabidopsis thaliana (Mouse-ear cress)).